The primary structure comprises 321 residues: AA9 family lytic polysaccharide monooxygenase C (321 aa).

Residues 1-18 form the signal peptide; that stretch reads MKLQLIIPFSFLISYVSA. His-19 contributes to the Cu(2+) binding site. Asn-33 is a glycosylation site (N-linked (GlcNAc...) asparagine). 2 cysteine pairs are disulfide-bonded: Cys-57-Cys-191 and Cys-161-Cys-242. His-103 is a Cu(2+) binding site. Positions 177 and 186 each coordinate O2. A Cu(2+)-binding site is contributed by Tyr-188. A glycan (N-linked (GlcNAc...) asparagine) is linked at Asn-195. The CBM1 domain maps to 283 to 319; it reads GTAAIYAQCGGQGWTGATVCASGSKCVVSSAFYSQCL.

Belongs to the polysaccharide monooxygenase AA9 family. Cu(2+) is required as a cofactor.

Its subcellular location is the secreted. It catalyses the reaction [(1-&gt;4)-beta-D-glucosyl]n+m + reduced acceptor + O2 = 4-dehydro-beta-D-glucosyl-[(1-&gt;4)-beta-D-glucosyl]n-1 + [(1-&gt;4)-beta-D-glucosyl]m + acceptor + H2O.. Major lytic polysaccharide monooxygenase (LPMO) that depolymerizes crystalline and amorphous polysaccharides via the oxidation of scissile alpha- or beta-(1-4)-glycosidic bonds, yielding C1 and C4 oxidation products. Catalysis by LPMOs requires the reduction of the active-site copper from Cu(II) to Cu(I) by a reducing agent and H(2)O(2) or O(2) as a cosubstrate. The polypeptide is AA9 family lytic polysaccharide monooxygenase C (Botryotinia fuckeliana (strain B05.10) (Noble rot fungus)).